The chain runs to 509 residues: Proline-rich receptor-like protein kinase PERK15 (509 aa).

Residues 1–44 form a disordered region; that stretch reads MSTDTIPSLSSPPAPEFPSTTPDTATSPAPSQPSIIGPSSLAPF. Residues 1 to 61 lie on the Extracellular side of the membrane; it reads MSTDTIPSLS…DGGSRNVALT (61 aa). The segment covering 18–34 has biased composition (low complexity); the sequence is PSTTPDTATSPAPSQPS. The helical transmembrane segment at 62-82 threads the bilayer; sequence GLITGVVLGATFVLLGVCIFV. The Cytoplasmic segment spans residues 83–509; that stretch reads CFYKRKKRKL…IEPEKNTKDT (427 aa). Thr132 carries the post-translational modification Phosphothreonine. One can recognise a Protein kinase domain in the interval 143 to 423; it reads FSNTNLLGQG…VRAFEGNISI (281 aa). ATP contacts are provided by residues 149-157 and Lys171; that span reads LGQGGFGYV. The residue at position 216 (Tyr216) is a Phosphotyrosine. Asp267 serves as the catalytic Proton acceptor. At Ser300 the chain carries Phosphoserine. Phosphothreonine occurs at positions 301 and 306. Tyr314 bears the Phosphotyrosine mark. Over residues 468–499 the composition is skewed to polar residues; the sequence is FGSSECSGLTSDNGQNPSGSSSITEGQRTTQE. A disordered region spans residues 468-509; sequence FGSSECSGLTSDNGQNPSGSSSITEGQRTTQEIEPEKNTKDT.

This sequence belongs to the protein kinase superfamily. Ser/Thr protein kinase family. As to expression, mostly expressed in inflorescence bolts, and, to a lower extent, in flower buds and siliques.

The protein resides in the cell membrane. The enzyme catalyses L-seryl-[protein] + ATP = O-phospho-L-seryl-[protein] + ADP + H(+). It catalyses the reaction L-threonyl-[protein] + ATP = O-phospho-L-threonyl-[protein] + ADP + H(+). The sequence is that of Proline-rich receptor-like protein kinase PERK15 (PERK15) from Arabidopsis thaliana (Mouse-ear cress).